We begin with the raw amino-acid sequence, 416 residues long: Cyclic dinucleotide synthase CdnG (416 aa).

Position 72 (Ser72) interacts with GTP. Residues Asp89, Asp91, and Asp140 contribute to the active site. Asp91 serves as a coordination point for GTP. Residue Asp91 coordinates Mg(2+). The tract at residues 145 to 167 (RRRAPKEKEGEIPHAKKGTRSDP) is disordered. Positions 150–167 (KEKEGEIPHAKKGTRSDP) are enriched in basic and acidic residues. GTP is bound by residues Lys236, Ser253, Glu305, Arg306, and Asp309.

It belongs to the CD-NTase family. G10 subfamily. It depends on Mg(2+) as a cofactor.

It catalyses the reaction UTP + GTP = 3',3'-cGMP-UMP + 2 diphosphate. The enzyme catalyses GTP + ATP = 3',3'-cGAMP + 2 diphosphate. The catalysed reaction is 2 ATP = 3',3'-c-di-AMP + 2 diphosphate. Cyclic nucleotide synthase (second messenger synthase) of a CBASS antivirus system. CBASS (cyclic oligonucleotide-based antiphage signaling system) provides immunity against bacteriophage. The CD-NTase protein synthesizes cyclic nucleotides in response to infection; these serve as specific second messenger signals. The signals activate a diverse range of effectors, leading to bacterial cell death and thus abortive phage infection. A type II-short CBASS system. In terms of biological role, cyclic dinucleotide synthase that catalyzes the synthesis of predominantly 3'3'-cGMP-UMP, followed by 3'3'-cGAMP and c-di-AMP in a reaction mixture of ATP, CTP, GTP and UTP. The cyclic nucleotide products are second messengers that activate the CBASS Cap5 effector nuclease, leading to DNA degradation and probably cell death. Cyclic nucleotides do not activate the effector equally; reactions with ATP/GTP, ATP/UTP and ATP alone activate Cap5, whereas reaction with GTP/UTP (the major in vitro product) do not. The sequence is that of Cyclic dinucleotide synthase CdnG from Bradyrhizobium diazoefficiens (strain JCM 10833 / BCRC 13528 / IAM 13628 / NBRC 14792 / USDA 110).